The sequence spans 146 residues: Large ribosomal subunit protein bL9 (146 aa).

It belongs to the bacterial ribosomal protein bL9 family.

Its function is as follows. Binds to the 23S rRNA. This is Large ribosomal subunit protein bL9 from Deinococcus geothermalis (strain DSM 11300 / CIP 105573 / AG-3a).